The sequence spans 121 residues: Large ribosomal subunit protein bL19 (121 aa).

The protein belongs to the bacterial ribosomal protein bL19 family.

In terms of biological role, this protein is located at the 30S-50S ribosomal subunit interface and may play a role in the structure and function of the aminoacyl-tRNA binding site. The sequence is that of Large ribosomal subunit protein bL19 (rplS) from Chlamydia pneumoniae (Chlamydophila pneumoniae).